Here is a 61-residue protein sequence, read N- to C-terminus: Large ribosomal subunit protein uL30 (61 aa).

The protein belongs to the universal ribosomal protein uL30 family. In terms of assembly, part of the 50S ribosomal subunit.

In Latilactobacillus sakei subsp. sakei (strain 23K) (Lactobacillus sakei subsp. sakei), this protein is Large ribosomal subunit protein uL30.